Consider the following 427-residue polypeptide: MKLKTKAKALRGRLRVPGDKSISHRAVIFGAIAEGQTVIHGLLRGQDVLATIQAFRDLGVTIYESADSLIIEGRGFKGLKPAQKPLDMGNSGTSMRLLAGLLAAQDFSVQLLGDDSLSRRPMDRITIPLSLMGAELSGQGEKELPPLIVKGCQELRPIHYQLPVASAQVKSAILLAALQTQGETVILEKELTRNHTEEMIEQFGGKLSVAGKQISIKGPQRLQGQTLQIPGDLSSAAFWLAAGLIVPGSDLVLENVGINPTRTGLLEVIEKMGGRISYQAVDKDRQAATLKVSYSTLKGIEISGDLIPRLIDELPVIALLATQAQGTTYIRDAQELRVKETDRIQAVTDVLGQMGADIQATEDGMVTRGKTPLHGAAVSTCGDHRIGMMTAIAALLVEEGQVTLERAEAILTSYPDFFKDLERLWHD.

3 residues coordinate 3-phosphoshikimate: lysine 20, serine 21, and arginine 25. Residue lysine 20 coordinates phosphoenolpyruvate. Residues glycine 92 and arginine 120 each contribute to the phosphoenolpyruvate site. 3-phosphoshikimate contacts are provided by serine 166, glutamine 168, aspartate 312, and lysine 339. Position 168 (glutamine 168) interacts with phosphoenolpyruvate. The active-site Proton acceptor is aspartate 312. Phosphoenolpyruvate is bound by residues arginine 343 and arginine 385.

The protein belongs to the EPSP synthase family. In terms of assembly, monomer.

The protein resides in the cytoplasm. The catalysed reaction is 3-phosphoshikimate + phosphoenolpyruvate = 5-O-(1-carboxyvinyl)-3-phosphoshikimate + phosphate. The protein operates within metabolic intermediate biosynthesis; chorismate biosynthesis; chorismate from D-erythrose 4-phosphate and phosphoenolpyruvate: step 6/7. Functionally, catalyzes the transfer of the enolpyruvyl moiety of phosphoenolpyruvate (PEP) to the 5-hydroxyl of shikimate-3-phosphate (S3P) to produce enolpyruvyl shikimate-3-phosphate and inorganic phosphate. The protein is 3-phosphoshikimate 1-carboxyvinyltransferase of Streptococcus equi subsp. equi (strain 4047).